Reading from the N-terminus, the 368-residue chain is MTVTGIIAEFNPFHNGHKYLLETAEGLKIIAMSGNFMQRGEPALIDKWIRSEMALKNGADIVVELPFFVSVQSADYFAQGAIDILCQLGIQQLAFGTENVIDYQKLIKVYEKKSKQMTAYLSTLEDTLSYPQKTQKMWEIFAGVKFSGQTPNHILGLSYAKASAGKHIQLCPIKRQGAAYHSKDKNHLLASASAIRQHLNDWDFISHSVPNAGLLINNPHMSWDHYFSFLKYQILNHSDLTSIFQVNDELASRIKKAIKVSQNIDHLVDTVATKRYTKARVRRILIYILVNAKEPTLPKGIHILGFTSKGQAHLKKLKKSRPLITRIGAETWDEMTQKADSIYQLGHQDIPEQSFGRIPIIIKKERLN.

Residues 7-20, Gly-96, Asn-152, and Arg-175 each bind ATP; that span reads IAEFNPFHNGHKYL.

It belongs to the TmcAL family.

The protein localises to the cytoplasm. The enzyme catalyses cytidine(34) in elongator tRNA(Met) + acetate + ATP = N(4)-acetylcytidine(34) in elongator tRNA(Met) + AMP + diphosphate. Its function is as follows. Catalyzes the formation of N(4)-acetylcytidine (ac(4)C) at the wobble position of elongator tRNA(Met), using acetate and ATP as substrates. First activates an acetate ion to form acetyladenylate (Ac-AMP) and then transfers the acetyl group to tRNA to form ac(4)C34. This chain is tRNA(Met) cytidine acetate ligase, found in Streptococcus pyogenes serotype M4 (strain MGAS10750).